Reading from the N-terminus, the 695-residue chain is Follicle-stimulating hormone receptor (695 aa).

The signal sequence occupies residues 1 to 17 (MALLLVALLAFLSLGSG). 2 cysteine pairs are disulfide-bonded: Cys18–Cys25 and Cys23–Cys32. An LRRNT domain is found at 18-46 (CHHRLCHCSNGVFLCQESKVTEIPSDLPR). Topologically, residues 18-366 (CHHRLCHCSN…EDIMGDDILR (349 aa)) are extracellular. LRR repeat units follow at residues 49–72 (VELRFVLTKLRVIPKGAFSGFGDL), 73–97 (EKIEISQNDVLEVIEANVFSNLPKL), 98–118 (HEIRIEKANNLLYIDPDAFQN), 119–143 (LPNLRYLLISNTGIKHLPAVHKIQS), 144–169 (LQKVLLDIQDNINIHTVERNSFMGLS), 170–192 (FESMTVWLSKNGIQEIHNCAFNG), 193–216 (TQLDELNLSDNSNLEELPNDVFQG), 217–240 (ASGPVILDISRTRIRSLPSYGLEN), and 241–259 (LKKLRAKSTYRLKKLPSLE). 2 N-linked (GlcNAc...) asparagine glycosylation sites follow: Asn191 and Asn199. Intrachain disulfides connect Cys275–Cys346, Cys276–Cys292, Cys276–Cys356, and Cys292–Cys338. Asn293 is a glycosylation site (N-linked (GlcNAc...) asparagine). A Sulfotyrosine modification is found at Tyr335. Residues 367 to 387 (VLIWFISILAITGNILVLVIL) form a helical membrane-spanning segment. The Cytoplasmic segment spans residues 388–398 (ITSQYKLTVPR). Residues 399 to 421 (FLMCNLAFADLCIGIYLLLIASV) form a helical membrane-spanning segment. Topologically, residues 422 to 443 (DVHTKTEYHNYAIDWQTGAGCD) are extracellular. A disulfide bridge links Cys442 with Cys517. A helical transmembrane segment spans residues 444-465 (AAGFFTVFASELSVYTLTAITL). Residues 466 to 485 (ERWHTITHAMQLECKVQLRH) are Cytoplasmic-facing. A helical membrane pass occupies residues 486-508 (AASIMLVGWIFAFAVALFPIFGI). Residues 509–528 (SSYMKVSICLPMDIDSPLSQ) are Extracellular-facing. Residues 529–550 (LYVMSLLVLNVLAFVVICGCYT) form a helical membrane-spanning segment. Over 551–573 (HIYLTVRNPNITSSSSDTKIAKR) the chain is Cytoplasmic. Residues 574 to 597 (MAMLIFTDFLCMAPISFFAISASL) form a helical membrane-spanning segment. The Extracellular segment spans residues 598 to 608 (KVPLITVSKSK). The helical transmembrane segment at 609–630 (ILLVLFYPINSCANPFLYAIFT) threads the bilayer. Residues 631–695 (KNFRRDFFIL…LIPLRHLAKN (65 aa)) lie on the Cytoplasmic side of the membrane.

The protein belongs to the G-protein coupled receptor 1 family. FSH/LSH/TSH subfamily. In terms of assembly, homotrimer. Functions as a homotrimer binding the FSH hormone heterodimer composed of CGA and FSHB. Interacts with ARRB2. Interacts with APPL2; interaction is independent of follicle stimulating hormone stimulation. In terms of processing, N-glycosylated; indirectly required for FSH-binding, possibly via a conformational change that allows high affinity binding of hormone. Sulfated.

The protein resides in the cell membrane. Functionally, g protein-coupled receptor for follitropin, the follicle-stimulating hormone. Through cAMP production activates the downstream PI3K-AKT and ERK1/ERK2 signaling pathways. The sequence is that of Follicle-stimulating hormone receptor (FSHR) from Bos taurus (Bovine).